A 608-amino-acid chain; its full sequence is Chaperone protein HtpG (608 aa).

Residues 1–332 (MQFQTEVNQL…VEDLPLNVSR (332 aa)) form an a; substrate-binding region. The interval 333-536 (EILQENQILK…KNKLDFAMQQ (204 aa)) is b. Residues 537-608 (LLKQMGQEQN…LTKIINKAFS (72 aa)) are c.

Belongs to the heat shock protein 90 family. Homodimer.

The protein localises to the cytoplasm. In terms of biological role, molecular chaperone. Has ATPase activity. The sequence is that of Chaperone protein HtpG from Campylobacter jejuni subsp. doylei (strain ATCC BAA-1458 / RM4099 / 269.97).